A 366-amino-acid chain; its full sequence is HTH-type transcriptional regulator MSMEG_6044/MSMEI_5883 (366 aa).

Residues 11–66 (ATLASLAAELKVSRTTISNAYNRPDQLSADLRERIFDAAKRLGYPGPDPVARSLRT) enclose the HTH lacI-type domain. A DNA-binding region (H-T-H motif) is located at residues 13-32 (LASLAAELKVSRTTISNAYN).

Functionally, transcriptional regulator that negatively regulates transcription of the mce4 operon, which is involved in cholesterol transport and utilization. Acts by binding to the promoter region of the mce4 operon. In Mycolicibacterium smegmatis (strain ATCC 700084 / mc(2)155) (Mycobacterium smegmatis), this protein is HTH-type transcriptional regulator MSMEG_6044/MSMEI_5883.